Consider the following 130-residue polypeptide: Arsenate reductase 2.2 (130 aa).

The 102-residue stretch at 18–119 folds into the Rhodanese domain; the sequence is RDPRIAVVDV…WELSGRPVCR (102 aa). The Cysteine persulfide intermediate role is filled by cysteine 70.

The enzyme catalyses [glutaredoxin]-dithiol + arsenate + glutathione + H(+) = glutathionyl-S-S-[glutaredoxin] + arsenite + H2O. Functionally, possesses arsenate reductase activity in vitro. Catalyzes the reduction of arsenate [As(V)] to arsenite [As(III)]. May play a role in arsenic retention in roots. Possesses phosphatase activity towards p-nitrophenyl phosphate in vitro. This Oryza sativa subsp. japonica (Rice) protein is Arsenate reductase 2.2 (ACR2.2).